Consider the following 515-residue polypeptide: MEELQGYLEEYRSRQQQFLYPLLFQEYIYVFAYDHGLNSSIFYEPQNSLGYDNKFSSVLVKRLIIRMYQKNYLIYSVNDIYQNIFVGHNNYFYFHFFSQILSEGFAVIVEIPFSLQLISSLEEKEIPKSHNLQSSHSIFPFLEDKLLHLNYLSDILIPYPAHMEILVQMLQSWIQDALSLHLLQFLLHEYYNWNSLIIPNKSIYVFSKDNKRLFCFLYNLYIYEYEFLLVFPCKQSSFLRLISSGVLLERIHFYVKIEHLGVCRIFCQKTLWIFKDPFIHYIRYQGKSILGSRGTHFLMKKWKYHLVHFWQYYFHFWSQPYRIDTKKLSNYSFYFLGYFSSVQMNSSMVRNQMLENSFLMDTLTKKLDTRIPIIPLIRSLSKAQFCTVSGYPISKPIWTDLADCDIINRFGRICRKLSHYHSGSSKKQSLYRMKYILRLSCARTLARKHKSSARSFLQRLSSGLLEEFFTEEEQVISLIFPKRTSFYLYGSYRERIWYLDIIRINDLVNSLLVTT.

Belongs to the intron maturase 2 family. MatK subfamily.

It localises to the plastid. The protein resides in the chloroplast. Usually encoded in the trnK tRNA gene intron. Probably assists in splicing its own and other chloroplast group II introns. This chain is Maturase K, found in Alpinia zerumbet (Shell ginger).